Consider the following 423-residue polypeptide: tRNA(Ile2) 2-agmatinylcytidine synthetase TiaS (423 aa).

A DNA-binding region (OB) is located at residues 273-347; the sequence is VIVYGRVVEE…GINIEKIKIL (75 aa).

The protein belongs to the TiaS family.

It localises to the cytoplasm. It catalyses the reaction cytidine(34) in tRNA(Ile2) + agmatine + ATP + H2O = 2-agmatinylcytidine(34) in tRNA(Ile2) + AMP + 2 phosphate + 2 H(+). In terms of biological role, ATP-dependent agmatine transferase that catalyzes the formation of 2-agmatinylcytidine (agm2C) at the wobble position (C34) of tRNA(Ile2), converting the codon specificity from AUG to AUA. The protein is tRNA(Ile2) 2-agmatinylcytidine synthetase TiaS of Methanocaldococcus jannaschii (strain ATCC 43067 / DSM 2661 / JAL-1 / JCM 10045 / NBRC 100440) (Methanococcus jannaschii).